We begin with the raw amino-acid sequence, 109 residues long: Trafficking protein particle complex subunit 2-like protein (109 aa).

This sequence belongs to the TRAPP small subunits family. Sedlin subfamily. Component of the multisubunit TRAPP (transport protein particle) complex, which includes at least TRAPPC2, TRAPPC2L, TRAPPC3, TRAPPC3L, TRAPPC4, TRAPPC5, TRAPPC8, TRAPPC9, TRAPPC10, TRAPPC11 and TRAPPC12. Interacts with the heterodimer TRAPPC3-TRAPPC6A.

It is found in the cytoplasm. The protein resides in the perinuclear region. Its subcellular location is the endoplasmic reticulum. The protein localises to the golgi apparatus. In terms of biological role, may play a role in vesicular transport from endoplasmic reticulum to Golgi. The sequence is that of Trafficking protein particle complex subunit 2-like protein (TRAPPC2L) from Pongo abelii (Sumatran orangutan).